The chain runs to 151 residues: Deoxyuridine 5'-triphosphate nucleotidohydrolase (151 aa).

Substrate-binding positions include 70 to 72 (RSG), N83, 87 to 89 (LID), and M97.

Belongs to the dUTPase family. Mg(2+) is required as a cofactor.

It catalyses the reaction dUTP + H2O = dUMP + diphosphate + H(+). It participates in pyrimidine metabolism; dUMP biosynthesis; dUMP from dCTP (dUTP route): step 2/2. Its function is as follows. This enzyme is involved in nucleotide metabolism: it produces dUMP, the immediate precursor of thymidine nucleotides and it decreases the intracellular concentration of dUTP so that uracil cannot be incorporated into DNA. This chain is Deoxyuridine 5'-triphosphate nucleotidohydrolase, found in Shigella sonnei (strain Ss046).